The following is a 234-amino-acid chain: Endonuclease V (234 aa).

Mg(2+)-binding residues include aspartate 36 and aspartate 104.

This sequence belongs to the endonuclease V family. Mg(2+) is required as a cofactor.

It localises to the cytoplasm. It catalyses the reaction Endonucleolytic cleavage at apurinic or apyrimidinic sites to products with a 5'-phosphate.. Its function is as follows. DNA repair enzyme involved in the repair of deaminated bases. Selectively cleaves double-stranded DNA at the second phosphodiester bond 3' to a deoxyinosine leaving behind the intact lesion on the nicked DNA. The polypeptide is Endonuclease V (Yersinia pseudotuberculosis serotype O:1b (strain IP 31758)).